The primary structure comprises 186 residues: Holliday junction branch migration complex subunit RuvA (186 aa).

Positions 1 to 63 (MNDYINGLLH…DNVFKYYGFK (63 aa)) are domain I. The tract at residues 64–137 (NQLIRDLFEL…QKELFNNKIS (74 aa)) is domain II. Serine 137 is a region of interest (flexible linker). The domain III stretch occupies residues 137-186 (SDKKNKVITSLEKLGYKTKDIYKIIINIDEDMNIEDLTKYVLEQLSYLHN).

The protein belongs to the RuvA family. In terms of assembly, homotetramer. Forms an RuvA(8)-RuvB(12)-Holliday junction (HJ) complex. HJ DNA is sandwiched between 2 RuvA tetramers; dsDNA enters through RuvA and exits via RuvB. An RuvB hexamer assembles on each DNA strand where it exits the tetramer. Each RuvB hexamer is contacted by two RuvA subunits (via domain III) on 2 adjacent RuvB subunits; this complex drives branch migration. In the full resolvosome a probable DNA-RuvA(4)-RuvB(12)-RuvC(2) complex forms which resolves the HJ.

Its subcellular location is the cytoplasm. The RuvA-RuvB-RuvC complex processes Holliday junction (HJ) DNA during genetic recombination and DNA repair, while the RuvA-RuvB complex plays an important role in the rescue of blocked DNA replication forks via replication fork reversal (RFR). RuvA specifically binds to HJ cruciform DNA, conferring on it an open structure. The RuvB hexamer acts as an ATP-dependent pump, pulling dsDNA into and through the RuvAB complex. HJ branch migration allows RuvC to scan DNA until it finds its consensus sequence, where it cleaves and resolves the cruciform DNA. The chain is Holliday junction branch migration complex subunit RuvA from Mycoplasma mycoides subsp. mycoides SC (strain CCUG 32753 / NCTC 10114 / PG1).